Reading from the N-terminus, the 232-residue chain is uncharacterized protein (232 aa).

The next 5 helical transmembrane spans lie at 69 to 91 (LISAIITMVLFSLLTPLMFYILF), 104 to 126 (FLEPTIYFILFLFGLHACIFFAL), 139 to 161 (FSRFGAFLIPFTAILILALFFFL), 166 to 188 (ICFTILAVGLIGAFFAIPPAMLS), and 200 to 219 (FIYSTIVIYLIICVTFQLII).

Its subcellular location is the cell membrane. This is an uncharacterized protein from Bacillus subtilis (strain 168).